The following is a 131-amino-acid chain: TQTSHPAKFHVEGEVYCNVCHSRNLINELSERMAGAQVQLDCKDDSKKVIYSIGGETDQDGVYRLPVVGYHEDCEIKLVKSSRPDCSEIPKLAKGTIQTSKVDLSKNTTITEKTRHVKPLSFRAKTDAPGC.

3 disulfides stabilise this stretch: Cys17/Cys86, Cys20/Cys131, and Cys42/Cys74. Zn(2+) is bound by residues His21, Asp45, Asp73, and Glu88. Asn107 is a glycosylation site (N-linked (GlcNAc...) asparagine).

It belongs to the Ole e I family. Post-translationally, exists in two variants: glycosylated and non-glycosylated. Carries a complex, major N-linked glycan, with a alpha-1,3-fucose residue in its structure and probably also a beta-1,2-xylose. The average modification of molecular mass due to glycosylation is approximately 969 Da.

Its subcellular location is the secreted. In Plantago lanceolata (English plantain), this protein is Major pollen allergen Pla l 1.